Here is a 59-residue protein sequence, read N- to C-terminus: U-scoloptoxin(23)-Er2a (59 aa).

It belongs to the scoloptoxin-23 family. Contains 1 disulfide bond. Expressed by the venom gland.

It localises to the secreted. The protein is U-scoloptoxin(23)-Er2a of Ethmostigmus rubripes (Giant centipede).